A 331-amino-acid chain; its full sequence is WW domain-containing protein C2F3.14c (331 aa).

Positions 1-184 are disordered; sequence MSSSKDCKAT…TNENQAQPSI (184 aa). Residues 9 to 22 are compositionally biased toward polar residues; sequence ATSNVDQTIPASNV. Residues 23–41 show a composition bias toward low complexity; the sequence is NSGDFISSNTSSSNSENSN. Positions 57 to 89 are enriched in polar residues; sequence SFISENTPKNTFESTQTYENLESISKNEPTSEA. Over residues 105-145 the composition is skewed to pro residues; the sequence is REPPLPNEPVPEEPLPGEPPLPDEPVPEEPLPGEPPLPNEP. The span at 158–184 shows a compositional bias: polar residues; it reads SDETVSETSKNDTSNSPTNENQAQPSI. The WW domain maps to 187-220; that stretch reads SEGHRIAAIWDPSQQAYYFWDTLTNTTSWNNPLE. The disordered stretch occupies residues 290 to 309; it reads YTRKEMEQMKRRTKEKKEMK. Residues 292-309 show a composition bias toward basic and acidic residues; that stretch reads RKEMEQMKRRTKEKKEMK.

It localises to the nucleus. The polypeptide is WW domain-containing protein C2F3.14c (Schizosaccharomyces pombe (strain 972 / ATCC 24843) (Fission yeast)).